We begin with the raw amino-acid sequence, 321 residues long: GDP-L-fucose synthase (321 aa).

NADP(+)-binding positions include 10–16 (GHRGMVG), 36–41 (RDELNL), and 105–108 (LGSS). Y136 acts as the Proton donor/acceptor in catalysis. Residues K140, 163–166 (PTNL), and H179 contribute to the NADP(+) site. 4 residues coordinate substrate: R187, W202, R209, and D278.

Belongs to the NAD(P)-dependent epimerase/dehydratase family. Fucose synthase subfamily. In terms of assembly, homodimer.

Its subcellular location is the cytoplasm. The catalysed reaction is GDP-beta-L-fucose + NADP(+) = GDP-4-dehydro-alpha-D-rhamnose + NADPH + H(+). It participates in nucleotide-sugar biosynthesis; GDP-L-fucose biosynthesis via de novo pathway; GDP-L-fucose from GDP-alpha-D-mannose: step 2/2. Its pathway is exopolysaccharide biosynthesis; colanic acid biosynthesis. With respect to regulation, subject to product inhibition by NADP and GDP-fucose. Functionally, catalyzes the two-step NADP-dependent conversion of GDP-4-dehydro-6-deoxy-D-mannose to GDP-fucose, involving an epimerase and a reductase reaction. This Escherichia coli (strain K12) protein is GDP-L-fucose synthase.